The primary structure comprises 1366 residues: Serine/threonine-protein kinase RUNKEL (1366 aa).

Residues 10-18 (IGHGKCSTV) and Lys33 each bind ATP. Asp121 acts as the Proton acceptor in catalysis. Disordered stretches follow at residues 276–356 (TKPC…VNIL), 367–386 (QKENEKENYRRPLPNSNENC), 398–502 (LDFD…DSSK), and 524–549 (PSRKSDKEAVHSLSFETPQPSDFSKK). Residues 283 to 302 (RNGDRPNKTPPKYREKDRKG) show a composition bias toward basic and acidic residues. Residues 304-313 (SKQNENSIQG) are compositionally biased toward polar residues. Residues 367–376 (QKENEKENYR) show a composition bias toward basic and acidic residues. A compositionally biased stretch (acidic residues) spans 398–414 (LDFDENNDDEGPDESEG). Positions 422–433 (QEERVMSHNENH) are enriched in basic and acidic residues. Residues 438–454 (VVSSNVPDENSSANETP) show a composition bias toward polar residues. HEAT repeat units lie at residues 595-633 (LTNGPIMLVLVKVLRLSKTPAFRVQIASLIGLLIRHSTS), 638-675 (LANSGILDSLTNGLRDKHEKVRRFSMAALGELLFYIST), 699-737 (QVSNALISLVSSVLRKGEDDLTQVYALRTIENICSQGAY), 835-872 (TEEKNLFPSLLSIIEQGTEVLRGKALLFVAFLCKNSRR), 878-907 (FCNARFLPVVDRLAKEKDSYLQQCLEAFVN), 908-945 (VIASIIPGMLDTITNDIQQLMTGRRHGPVSPLNSRAPV), 946-986 (KTNA…LVEA), 992-1018 (DDFRVTLLQVLECITGDAPLVTQNGEI), 1019-1057 (IIREILPSLAAIYNGNKDGDARFLCLKIWFDSLTILLTE), 1072-1111 (ISNSHFLPLYPALIQDEDPIPAYAQKLLVMLVEFDYIKIS), 1279-1316 (TNLPKITPILDSWRRRKSTELHLLVLKRVLHCLGYACK), and 1329-1366 (GHDVSKINAIVSEMKNSDAAGLNSIASLVAMELQRLPR).

The protein belongs to the protein kinase superfamily. Ser/Thr protein kinase family. As to quaternary structure, binds to microtubules (MT). In terms of tissue distribution, expressed in proliferating tissues of seedlings, lateral roots, young rosette leaves, siliques, flowers, embryos and stems (including apical meristem).

Its subcellular location is the cytoplasm. It is found in the cytoskeleton. It localises to the phragmoplast. The protein localises to the spindle. The enzyme catalyses L-seryl-[protein] + ATP = O-phospho-L-seryl-[protein] + ADP + H(+). The catalysed reaction is L-threonyl-[protein] + ATP = O-phospho-L-threonyl-[protein] + ADP + H(+). Its function is as follows. Essential protein that regulates phragmoplast microtubule organization during cell plate expansion in cytokinesis during cell division, both somatic and syncytial. Required for endosperm cellularisation. In pollen development, involved in cellularisation during microsporogenesis by regulating radial microtubules (MT) organization in microspore mother cells. Seems to not have kinase activity. In Arabidopsis thaliana (Mouse-ear cress), this protein is Serine/threonine-protein kinase RUNKEL.